The sequence spans 67 residues: Conotoxin Cl6.10 (67 aa).

An N-terminal signal peptide occupies residues 1–24; the sequence is MKLTCVLIAAVLLLAVCQLDSADA. Positions 25-37 are excised as a propeptide; sequence TAYMRKDPSLRSP. 3 cysteine pairs are disulfide-bonded: C43–C57, C50–C61, and C56–C65.

This sequence belongs to the conotoxin O1 superfamily. As to expression, expressed by the venom duct.

The protein localises to the secreted. This chain is Conotoxin Cl6.10, found in Californiconus californicus (California cone).